The following is a 338-amino-acid chain: Glycerol-3-phosphate dehydrogenase [NAD(P)+] (338 aa).

NADPH-binding residues include serine 12, tryptophan 13, lysine 34, and lysine 110. Sn-glycerol 3-phosphate contacts are provided by lysine 110, glycine 141, and serine 143. Position 145 (alanine 145) interacts with NADPH. Residues lysine 196, aspartate 249, serine 259, arginine 260, and asparagine 261 each coordinate sn-glycerol 3-phosphate. Lysine 196 functions as the Proton acceptor in the catalytic mechanism. Arginine 260 lines the NADPH pocket. Residues valine 284 and glutamate 286 each coordinate NADPH.

This sequence belongs to the NAD-dependent glycerol-3-phosphate dehydrogenase family.

Its subcellular location is the cytoplasm. It carries out the reaction sn-glycerol 3-phosphate + NAD(+) = dihydroxyacetone phosphate + NADH + H(+). The catalysed reaction is sn-glycerol 3-phosphate + NADP(+) = dihydroxyacetone phosphate + NADPH + H(+). The protein operates within membrane lipid metabolism; glycerophospholipid metabolism. In terms of biological role, catalyzes the reduction of the glycolytic intermediate dihydroxyacetone phosphate (DHAP) to sn-glycerol 3-phosphate (G3P), the key precursor for phospholipid synthesis. This chain is Glycerol-3-phosphate dehydrogenase [NAD(P)+], found in Ligilactobacillus salivarius (strain UCC118) (Lactobacillus salivarius).